Consider the following 250-residue polypeptide: Peroxiredoxin (250 aa).

In terms of domain architecture, Thioredoxin spans 6–163; that stretch reads PLIGERFPEM…ILRIVKALKL (158 aa). The active-site Cysteine sulfenic acid (-SOH) intermediate is the Cys50. Arg126 contributes to the substrate binding site. Cys207 and Cys213 are oxidised to a cystine.

The protein belongs to the peroxiredoxin family. Prx6 subfamily. As to quaternary structure, homodecamer. Pentamer of dimers that assemble into a ring structure.

The protein localises to the cytoplasm. It carries out the reaction a hydroperoxide + [thioredoxin]-dithiol = an alcohol + [thioredoxin]-disulfide + H2O. In terms of biological role, thiol-specific peroxidase that catalyzes the reduction of hydrogen peroxide and organic hydroperoxides to water and alcohols, respectively. Plays a role in cell protection against oxidative stress by detoxifying peroxides. This Aeropyrum pernix (strain ATCC 700893 / DSM 11879 / JCM 9820 / NBRC 100138 / K1) protein is Peroxiredoxin.